Here is a 454-residue protein sequence, read N- to C-terminus: Growth/differentiation factor 9 (454 aa).

An N-terminal signal peptide occupies residues 1–24 (MARPNKFLLWFCCFAWLCFPISLG). Residues 25 to 319 (SQASGGEAQI…GRSSHHRHRR (295 aa)) constitute a propeptide that is removed on maturation. N-linked (GlcNAc...) asparagine glycosylation is found at asparagine 106, asparagine 163, asparagine 236, asparagine 255, and asparagine 268. A disordered region spans residues 303-330 (GEEAAEDGRSSHHRHRRGQETVSSELKK). Serine 325 bears the Phosphoserine; by CK mark. Asparagine 338 carries N-linked (GlcNAc...) asparagine glycosylation. Cystine bridges form between cysteine 353–cysteine 419, cysteine 382–cysteine 451, and cysteine 386–cysteine 453.

The protein belongs to the TGF-beta family. In terms of assembly, homodimer or heterodimer (Potential). But, in contrast to other members of this family, cannot be disulfide-linked. In terms of processing, phosphorylated; phosphorylation is critical for GDF9 function. In vitro, can be phosphorylated by CK at Ser-325. As to expression, expressed in ovarian granulosa cells. Present in oocytes of primary follicles (at protein level).

It localises to the secreted. Its function is as follows. Required for ovarian folliculogenesis. Promotes primordial follicle development. Stimulates granulosa cell proliferation. Promotes cell transition from G0/G1 to S and G2/M phases, through an increase of CCND1 and CCNE1 expression, and RB1 phosphorylation. It regulates STAR expression and cAMP-dependent progesterone release in granulosa and thecal cells. Attenuates the suppressive effects of activin A on STAR expression and progesterone production by increasing the expression of inhibin B. It suppresses FST and FSTL3 production in granulosa-lutein cells. In Homo sapiens (Human), this protein is Growth/differentiation factor 9 (GDF9).